A 248-amino-acid polypeptide reads, in one-letter code: Small ribosomal subunit protein uS2 (248 aa).

It belongs to the universal ribosomal protein uS2 family.

In Dechloromonas aromatica (strain RCB), this protein is Small ribosomal subunit protein uS2.